A 906-amino-acid chain; its full sequence is Protein transport protein SEC24-2 (906 aa).

Zn(2+)-binding residues include cysteine 222, cysteine 225, cysteine 244, and cysteine 247. A zinc finger-like region spans residues 222 to 247 (CRRCRSYMNPFVTFIEQGRRWRCNFC).

Belongs to the SEC23/SEC24 family. SEC24 subfamily. In terms of assembly, the COPII coat is composed of at least 5 proteins: the SEC23/24 complex, the SEC13/31 complex, and the protein SAR1. Golgi apparatus membrane; Peripheral membrane protein; Cytoplasmic side.

The protein localises to the cytoplasm. It is found in the cytoplasmic vesicle. It localises to the COPII-coated vesicle membrane. Its subcellular location is the endoplasmic reticulum membrane. The protein resides in the golgi apparatus membrane. Functionally, component of the coat protein complex II (COPII) which promotes the formation of transport vesicles from the endoplasmic reticulum (ER). The coat has two main functions, the physical deformation of the endoplasmic reticulum membrane into vesicles and the selection of cargo molecules. The chain is Protein transport protein SEC24-2 (SEC242) from Candida glabrata (strain ATCC 2001 / BCRC 20586 / JCM 3761 / NBRC 0622 / NRRL Y-65 / CBS 138) (Yeast).